The following is a 356-amino-acid chain: Holliday junction branch migration complex subunit RuvB (356 aa).

Residues 1–14 (MAIVSSITNHSSLP) are compositionally biased toward polar residues. The segment at 1 to 20 (MAIVSSITNHSSLPNDKGEE) is disordered. The large ATPase domain (RuvB-L) stretch occupies residues 13 to 201 (LPNDKGEERL…FGITQRLDFY (189 aa)). 9 residues coordinate ATP: leucine 40, arginine 41, glycine 82, lysine 85, threonine 86, threonine 87, arginine 191, tyrosine 201, and arginine 238. Threonine 86 provides a ligand contact to Mg(2+). The tract at residues 202-273 (NYLDLENIIK…VVNDALDLHR (72 aa)) is small ATPAse domain (RuvB-S). The head domain (RuvB-H) stretch occupies residues 276–356 (QRGLDATDRS…LLTSPNNIDK (81 aa)). Positions 331 and 336 each coordinate DNA.

The protein belongs to the RuvB family. In terms of assembly, homohexamer. Forms an RuvA(8)-RuvB(12)-Holliday junction (HJ) complex. HJ DNA is sandwiched between 2 RuvA tetramers; dsDNA enters through RuvA and exits via RuvB. An RuvB hexamer assembles on each DNA strand where it exits the tetramer. Each RuvB hexamer is contacted by two RuvA subunits (via domain III) on 2 adjacent RuvB subunits; this complex drives branch migration. In the full resolvosome a probable DNA-RuvA(4)-RuvB(12)-RuvC(2) complex forms which resolves the HJ.

It localises to the cytoplasm. The catalysed reaction is ATP + H2O = ADP + phosphate + H(+). The RuvA-RuvB-RuvC complex processes Holliday junction (HJ) DNA during genetic recombination and DNA repair, while the RuvA-RuvB complex plays an important role in the rescue of blocked DNA replication forks via replication fork reversal (RFR). RuvA specifically binds to HJ cruciform DNA, conferring on it an open structure. The RuvB hexamer acts as an ATP-dependent pump, pulling dsDNA into and through the RuvAB complex. RuvB forms 2 homohexamers on either side of HJ DNA bound by 1 or 2 RuvA tetramers; 4 subunits per hexamer contact DNA at a time. Coordinated motions by a converter formed by DNA-disengaged RuvB subunits stimulates ATP hydrolysis and nucleotide exchange. Immobilization of the converter enables RuvB to convert the ATP-contained energy into a lever motion, pulling 2 nucleotides of DNA out of the RuvA tetramer per ATP hydrolyzed, thus driving DNA branch migration. The RuvB motors rotate together with the DNA substrate, which together with the progressing nucleotide cycle form the mechanistic basis for DNA recombination by continuous HJ branch migration. Branch migration allows RuvC to scan DNA until it finds its consensus sequence, where it cleaves and resolves cruciform DNA. This Prochlorococcus marinus (strain NATL2A) protein is Holliday junction branch migration complex subunit RuvB.